A 187-amino-acid chain; its full sequence is Acetyl-CoA decarbonylase/synthase complex subunit epsilon (187 aa).

At Met1 the chain carries Blocked amino end (Met).

This sequence belongs to the CdhB family. Heterotetramer of two alpha and two epsilon subunits. The ACDS complex is made up of alpha, epsilon, beta, gamma and delta subunits with a probable stoichiometry of (alpha(2)epsilon(2))(4)-beta(8)-(gamma(1)delta(1))(8).

Its function is as follows. Part of a complex that catalyzes the reversible cleavage of acetyl-CoA, allowing autotrophic growth from CO(2). The alpha-epsilon subcomponent functions as a carbon monoxide dehydrogenase. The precise role of the epsilon subunit is unclear; it may have a stabilizing role within the alpha(2)epsilon(2) component and/or be involved in electron transfer to FAD during a potential FAD-mediated CO oxidation. In Methanothrix soehngenii (Methanosaeta concilii), this protein is Acetyl-CoA decarbonylase/synthase complex subunit epsilon.